Consider the following 46-residue polypeptide: Large ribosomal subunit protein bL36 (46 aa).

The protein belongs to the bacterial ribosomal protein bL36 family.

This chain is Large ribosomal subunit protein bL36, found in Salmonella agona (strain SL483).